Here is a 259-residue protein sequence, read N- to C-terminus: 4-hydroxy-tetrahydrodipicolinate reductase (259 aa).

NAD(+) is bound by residues 9–14 and Glu-35; that span reads GAGGRM. NADP(+) is bound at residue Arg-36. NAD(+)-binding positions include 92-94 and 116-119; these read GTT and APNM. His-149 serves as the catalytic Proton donor/acceptor. His-150 is a (S)-2,3,4,5-tetrahydrodipicolinate binding site. The active-site Proton donor is Lys-153. 159–160 is a (S)-2,3,4,5-tetrahydrodipicolinate binding site; it reads GT.

The protein belongs to the DapB family.

It is found in the cytoplasm. It carries out the reaction (S)-2,3,4,5-tetrahydrodipicolinate + NAD(+) + H2O = (2S,4S)-4-hydroxy-2,3,4,5-tetrahydrodipicolinate + NADH + H(+). The catalysed reaction is (S)-2,3,4,5-tetrahydrodipicolinate + NADP(+) + H2O = (2S,4S)-4-hydroxy-2,3,4,5-tetrahydrodipicolinate + NADPH + H(+). Its pathway is amino-acid biosynthesis; L-lysine biosynthesis via DAP pathway; (S)-tetrahydrodipicolinate from L-aspartate: step 4/4. Catalyzes the conversion of 4-hydroxy-tetrahydrodipicolinate (HTPA) to tetrahydrodipicolinate. This chain is 4-hydroxy-tetrahydrodipicolinate reductase, found in Nitratidesulfovibrio vulgaris (strain DP4) (Desulfovibrio vulgaris).